The primary structure comprises 204 residues: Holliday junction branch migration complex subunit RuvA (204 aa).

A domain I region spans residues 1 to 64 (MIGRLQGILL…EDAHLLFGFS (64 aa)). Residues 65-143 (AKTDRTLFRE…GIKQPDFFVE (79 aa)) form a domain II region. The tract at residues 144–155 (SSHVGAVDPVTT) is flexible linker. A domain III region spans residues 156-204 (SPEVPAEEAVAALMALGYKASDAEKMVKRIAKPHLTSEQLIREALKAAL).

This sequence belongs to the RuvA family. In terms of assembly, homotetramer. Forms an RuvA(8)-RuvB(12)-Holliday junction (HJ) complex. HJ DNA is sandwiched between 2 RuvA tetramers; dsDNA enters through RuvA and exits via RuvB. An RuvB hexamer assembles on each DNA strand where it exits the tetramer. Each RuvB hexamer is contacted by two RuvA subunits (via domain III) on 2 adjacent RuvB subunits; this complex drives branch migration. In the full resolvosome a probable DNA-RuvA(4)-RuvB(12)-RuvC(2) complex forms which resolves the HJ.

Its subcellular location is the cytoplasm. Its function is as follows. The RuvA-RuvB-RuvC complex processes Holliday junction (HJ) DNA during genetic recombination and DNA repair, while the RuvA-RuvB complex plays an important role in the rescue of blocked DNA replication forks via replication fork reversal (RFR). RuvA specifically binds to HJ cruciform DNA, conferring on it an open structure. The RuvB hexamer acts as an ATP-dependent pump, pulling dsDNA into and through the RuvAB complex. HJ branch migration allows RuvC to scan DNA until it finds its consensus sequence, where it cleaves and resolves the cruciform DNA. This is Holliday junction branch migration complex subunit RuvA from Mannheimia succiniciproducens (strain KCTC 0769BP / MBEL55E).